The sequence spans 1106 residues: Voltage-dependent calcium channel subunit alpha-2/delta-1 (1106 aa).

The signal sequence occupies residues 1–26 (MAAGRPLAWTLTLWQAWLILIGPSSE). Over 27–1076 (EPFPSAVTIK…VLEDYTDCGG (1050 aa)) the chain is Extracellular. Residue Asn-94 is glycosylated (N-linked (GlcNAc...) asparagine). Position 121 is a phosphoserine (Ser-121). Residues Asn-138 and Asn-186 are each glycosylated (N-linked (GlcNAc...) asparagine). Residues 255 to 432 (DMLILVDVSG…INTQEYLDVL (178 aa)) form the VWFA domain. Asp-261, Ser-263, and Ser-265 together coordinate a divalent metal cation. The short motif at 261–265 (DVSGS) is the MIDAS-like motif element. Asn-326 and Asn-350 each carry an N-linked (GlcNAc...) asparagine glycan. Residues Cys-406 and Cys-1062 are joined by a disulfide bond. The Cache domain occupies 448-539 (WTNVYLDALE…QPKPIGVGIP (92 aa)). Residues Asn-615, Asn-784, and Asn-891 are each glycosylated (N-linked (GlcNAc...) asparagine). Residues 1077 to 1097 (VSGLNPSLWSIIGIQFVLLWL) traverse the membrane as a helical segment. Topologically, residues 1098-1106 (VSGSRHCLL) are cytoplasmic.

The protein belongs to the calcium channel subunit alpha-2/delta family. In terms of assembly, dimer formed of alpha-2-1 and delta-1 chains; disulfide-linked. Voltage-dependent calcium channels are multisubunit complexes, consisting of alpha-1 (CACNA1), alpha-2 (CACNA2D), beta (CACNB) and delta (CACNA2D) subunits in a 1:1:1:1 ratio. In terms of processing, proteolytically processed into subunits alpha-2-1 and delta-1 that are disulfide-linked. In terms of tissue distribution, skeletal muscle.

It is found in the membrane. Its subcellular location is the cell membrane. In terms of biological role, the alpha-2/delta subunit of voltage-dependent calcium channels regulates calcium current density and activation/inactivation kinetics of the calcium channel. Plays an important role in excitation-contraction coupling. The polypeptide is Voltage-dependent calcium channel subunit alpha-2/delta-1 (CACNA2D1) (Oryctolagus cuniculus (Rabbit)).